The chain runs to 120 residues: Large ribosomal subunit protein bL12 (120 aa).

It belongs to the bacterial ribosomal protein bL12 family. In terms of assembly, homodimer. Part of the ribosomal stalk of the 50S ribosomal subunit. Forms a multimeric L10(L12)X complex, where L10 forms an elongated spine to which 2 to 4 L12 dimers bind in a sequential fashion. Binds GTP-bound translation factors.

Its function is as follows. Forms part of the ribosomal stalk which helps the ribosome interact with GTP-bound translation factors. Is thus essential for accurate translation. This chain is Large ribosomal subunit protein bL12, found in Haemophilus ducreyi (strain 35000HP / ATCC 700724).